We begin with the raw amino-acid sequence, 465 residues long: Cerebellar degeneration-related protein 2-like (465 aa).

Coiled coils occupy residues 31–64 (AAEL…HEIE), 91–142 (ARDL…LEQL), and 188–266 (LEQE…YLLA). The disordered stretch occupies residues 282–315 (APEADDPQPGSGDDSNAQDGVSSPAASPSHAVRK). A phosphoserine mark is found at Ser308, Ser318, and Ser344. A coiled-coil region spans residues 350–377 (MSILREVDEQYHALLEKYEELLSKCRQH). The disordered stretch occupies residues 382-421 (RHAGVQTSRPISRDSSWRDLLGGEESPGEGKAGEKSLSQH). Ser407 carries the post-translational modification Phosphoserine.

The protein belongs to the CDR2 family.

The chain is Cerebellar degeneration-related protein 2-like (Cdr2l) from Mus musculus (Mouse).